A 145-amino-acid chain; its full sequence is Maximins 3/H11 type 3 (145 aa).

Positions 1–18 (MNFKYIVAVSFLIASAYA) are cleaved as a signal peptide. 2 consecutive propeptides follow at residues 19–43 (RSVQ…LREI) and 75–122 (TAEE…TKKE). Ile-144 bears the Isoleucine amide mark.

Belongs to the bombinin family. In terms of tissue distribution, expressed by the skin glands.

It is found in the secreted. Its function is as follows. Maximin-3 shows antibacterial activity against both Gram-positive and Gram-negative bacteria. It also shows antimicrobial activity against the fungus C.albicans, but not against A.flavus nor P.uticale. It has little hemolytic activity. It possess a significant cytotoxicity against tumor cell lines. It possess a significant anti-HIV activity. It shows high spermicidal activity. Functionally, maximin-H11 shows antimicrobial activity against bacteria and against the fungus C.albicans. Shows strong hemolytic activity. The sequence is that of Maximins 3/H11 type 3 from Bombina maxima (Giant fire-bellied toad).